Reading from the N-terminus, the 520-residue chain is Poly(A)-specific ribonuclease PNLDC1 (520 aa).

D17, E19, D260, and D354 together coordinate Mg(2+). A helical transmembrane segment spans residues 495–515; it reads VNCLLQVCGIVTAWALLAFIL.

Belongs to the CAF1 family. The cofactor is Mg(2+).

The protein localises to the endoplasmic reticulum membrane. It carries out the reaction Exonucleolytic cleavage of poly(A) to 5'-AMP.. Its function is as follows. 3'-exoribonuclease that has a preference for poly(A) tails of mRNAs, thereby efficiently degrading poly(A) tails. Exonucleolytic degradation of the poly(A) tail is often the first step in the decay of eukaryotic mRNAs and is also used to silence certain maternal mRNAs translationally during oocyte maturation and early embryonic development. May act as a regulator of multipotency in embryonic stem cells. Is a critical factor for proper spermatogenesis, involved in pre-piRNAs processing to generate mature piRNAs. The polypeptide is Poly(A)-specific ribonuclease PNLDC1 (Homo sapiens (Human)).